Consider the following 804-residue polypeptide: Leucine--tRNA ligase (804 aa).

The 'HIGH' region motif lies at 40-51 (PYPSGQGLHVGH). Residues 576 to 580 (KMSKS) carry the 'KMSKS' region motif. An ATP-binding site is contributed by K579.

The protein belongs to the class-I aminoacyl-tRNA synthetase family.

It is found in the cytoplasm. The enzyme catalyses tRNA(Leu) + L-leucine + ATP = L-leucyl-tRNA(Leu) + AMP + diphosphate. The protein is Leucine--tRNA ligase of Oceanobacillus iheyensis (strain DSM 14371 / CIP 107618 / JCM 11309 / KCTC 3954 / HTE831).